The primary structure comprises 1369 residues: Rho-associated protein kinase 1 (1369 aa).

Position 2 is an N-acetylserine (S2). Residues 76-338 (YEVVKVIGRG…VEEIKRHLFF (263 aa)) enclose the Protein kinase domain. Residues 82-90 (IGRGAFGEV) and K105 each bind ATP. The Proton acceptor role is filled by D198. An AGC-kinase C-terminal domain is found at 341–409 (DQWAWETLRD…YSNRRYLPSA (69 aa)). The interval 368-727 (FDDLEEDKGD…KKLKEEREAR (360 aa)) is interaction with FHOD1. Positions 422 to 692 (KNVQESLQKT…RLEQEVNEHK (271 aa)) form a coiled coil. Residues 479 to 556 (SAVSQIEKEK…LEEANDLLRT (78 aa)) form the REM-1 domain. The SHROOM3 binding stretch occupies residues 707 to 946 (EAKSVAMCEM…TVSRLEEANN (240 aa)). The RhoBD domain maps to 949-1015 (TKDIELLRKE…LAEIMNRKDF (67 aa)). Residues 998–1010 (LKTQAVNKLAEIM) form an RHOA binding region. Residues 1011 to 1102 (NRKDFKIDRK…KLLDLSDSTS (92 aa)) are a coiled coil. Residues S1105 and S1108 each carry the phosphoserine modification. The segment at 1115–1369 (NLPVGSACIP…VVKNTSGKTS (255 aa)) is auto-inhibitory. Residues 1133 to 1332 (SSRIEGWLSV…WVTHLVKKIP (200 aa)) enclose the PH domain. Residues 1243–1298 (GHEFIPTLYHFPANCEACAKPLWHVFKPPPALECRRCHVKSHRDHLDKKEDLIPPC) form a Phorbol-ester/DAG-type zinc finger. Phosphoserine is present on S1343.

It belongs to the protein kinase superfamily. AGC Ser/Thr protein kinase family. As to quaternary structure, homodimer. Interacts with GEM, MYLC2B, RHOE, LIMK1, LIMK2, TSG101, CHORDC1, DAPK3, PFN1, PTEN and JIP3. Interacts with FHOD1 in a Src-dependent manner. Interacts with ITGB1BP1 (via N-terminus and PTB domain). Interacts with RHOA (activated by GTP), RHOB, RHOC and PPP1R12A. Interacts with SHROOM3. Requires Mg(2+) as cofactor. Post-translationally, autophosphorylated on serine and threonine residues. In terms of processing, cleaved by caspase-3 during apoptosis. This leads to constitutive activation of the kinase and membrane blebbing. Highly expressed in brain, spleen, lung, liver, skeletal muscle, kidney and testis.

It is found in the cytoplasm. The protein localises to the cytoskeleton. It localises to the microtubule organizing center. The protein resides in the centrosome. Its subcellular location is the centriole. It is found in the golgi apparatus membrane. The protein localises to the cell projection. It localises to the bleb. The protein resides in the cell membrane. Its subcellular location is the lamellipodium. It is found in the ruffle. The catalysed reaction is L-seryl-[protein] + ATP = O-phospho-L-seryl-[protein] + ADP + H(+). The enzyme catalyses L-threonyl-[protein] + ATP = O-phospho-L-threonyl-[protein] + ADP + H(+). Activated by RHOA binding. Inhibited by Y-27632. Functionally, protein kinase which is a key regulator of the actin cytoskeleton and cell polarity. Involved in regulation of smooth muscle contraction, actin cytoskeleton organization, stress fiber and focal adhesion formation, neurite retraction, cell adhesion and motility via phosphorylation of DAPK3, GFAP, LIMK1, LIMK2, MYL9/MLC2, TPPP, PFN1 and PPP1R12A. Phosphorylates FHOD1 and acts synergistically with it to promote SRC-dependent non-apoptotic plasma membrane blebbing. Phosphorylates JIP3 and regulates the recruitment of JNK to JIP3 upon UVB-induced stress. Acts as a suppressor of inflammatory cell migration by regulating PTEN phosphorylation and stability. Acts as a negative regulator of VEGF-induced angiogenic endothelial cell activation. Required for centrosome positioning and centrosome-dependent exit from mitosis. Plays a role in terminal erythroid differentiation. Inhibits podocyte motility via regulation of actin cytoskeletal dynamics and phosphorylation of CFL1. Promotes keratinocyte terminal differentiation. Involved in osteoblast compaction through the fibronectin fibrillogenesis cell-mediated matrix assembly process, essential for osteoblast mineralization. May regulate closure of the eyelids and ventral body wall by inducing the assembly of actomyosin bundles. This Rattus norvegicus (Rat) protein is Rho-associated protein kinase 1 (Rock1).